Consider the following 218-residue polypeptide: Epoxyqueuosine reductase QueH (218 aa).

Residues Cys22, Cys23, Cys101, and Cys104 each coordinate [4Fe-4S] cluster. An intrachain disulfide couples Cys184 to Cys186.

It belongs to the QueH family.

It carries out the reaction epoxyqueuosine(34) in tRNA + AH2 = queuosine(34) in tRNA + A + H2O. It participates in tRNA modification; tRNA-queuosine biosynthesis. Its function is as follows. Catalyzes the conversion of epoxyqueuosine (oQ) to queuosine (Q), which is a hypermodified base found in the wobble positions of tRNA(Asp), tRNA(Asn), tRNA(His) and tRNA(Tyr). In Acinetobacter baylyi (strain ATCC 33305 / BD413 / ADP1), this protein is Epoxyqueuosine reductase QueH.